A 466-amino-acid chain; its full sequence is Adenosylhomocysteinase (466 aa).

Substrate contacts are provided by T57, D132, and E192. T193–T195 is a binding site for NAD(+). Residues K222 and D226 each contribute to the substrate site. Residues N227, G256–G261, E279, N314, I335–H337, and N380 contribute to the NAD(+) site.

This sequence belongs to the adenosylhomocysteinase family. Requires NAD(+) as cofactor.

It is found in the cytoplasm. The catalysed reaction is S-adenosyl-L-homocysteine + H2O = L-homocysteine + adenosine. It functions in the pathway amino-acid biosynthesis; L-homocysteine biosynthesis; L-homocysteine from S-adenosyl-L-homocysteine: step 1/1. May play a key role in the regulation of the intracellular concentration of adenosylhomocysteine. The protein is Adenosylhomocysteinase of Rhizobium rhizogenes (strain K84 / ATCC BAA-868) (Agrobacterium radiobacter).